The chain runs to 186 residues: uncharacterized protein (186 aa).

This is an uncharacterized protein from Caenorhabditis elegans.